Consider the following 282-residue polypeptide: 4-diphosphocytidyl-2-C-methyl-D-erythritol kinase (282 aa).

K8 is a catalytic residue. 91 to 101 (PVAAGLAGGST) contacts ATP. Residue D133 is part of the active site.

This sequence belongs to the GHMP kinase family. IspE subfamily.

The catalysed reaction is 4-CDP-2-C-methyl-D-erythritol + ATP = 4-CDP-2-C-methyl-D-erythritol 2-phosphate + ADP + H(+). It participates in isoprenoid biosynthesis; isopentenyl diphosphate biosynthesis via DXP pathway; isopentenyl diphosphate from 1-deoxy-D-xylulose 5-phosphate: step 3/6. Its function is as follows. Catalyzes the phosphorylation of the position 2 hydroxy group of 4-diphosphocytidyl-2C-methyl-D-erythritol. This chain is 4-diphosphocytidyl-2-C-methyl-D-erythritol kinase, found in Symbiobacterium thermophilum (strain DSM 24528 / JCM 14929 / IAM 14863 / T).